A 154-amino-acid polypeptide reads, in one-letter code: Large ribosomal subunit protein uL22c (154 aa).

It belongs to the universal ribosomal protein uL22 family. As to quaternary structure, part of the 50S ribosomal subunit.

It localises to the plastid. It is found in the chloroplast. In terms of biological role, this protein binds specifically to 23S rRNA. Its function is as follows. The globular domain of the protein is located near the polypeptide exit tunnel on the outside of the subunit, while an extended beta-hairpin is found that lines the wall of the exit tunnel in the center of the 70S ribosome. The sequence is that of Large ribosomal subunit protein uL22c (rpl22) from Guizotia abyssinica (Niger).